The sequence spans 185 residues: Elongation factor P (185 aa).

It belongs to the elongation factor P family.

Its subcellular location is the cytoplasm. It participates in protein biosynthesis; polypeptide chain elongation. In terms of biological role, involved in peptide bond synthesis. Stimulates efficient translation and peptide-bond synthesis on native or reconstituted 70S ribosomes in vitro. Probably functions indirectly by altering the affinity of the ribosome for aminoacyl-tRNA, thus increasing their reactivity as acceptors for peptidyl transferase. The chain is Elongation factor P from Bacillus anthracis (strain CDC 684 / NRRL 3495).